The primary structure comprises 347 residues: Histidinol-phosphate aminotransferase (347 aa).

K209 carries the post-translational modification N6-(pyridoxal phosphate)lysine.

Belongs to the class-II pyridoxal-phosphate-dependent aminotransferase family. Histidinol-phosphate aminotransferase subfamily. As to quaternary structure, homodimer. The cofactor is pyridoxal 5'-phosphate.

It carries out the reaction L-histidinol phosphate + 2-oxoglutarate = 3-(imidazol-4-yl)-2-oxopropyl phosphate + L-glutamate. It participates in amino-acid biosynthesis; L-histidine biosynthesis; L-histidine from 5-phospho-alpha-D-ribose 1-diphosphate: step 7/9. The chain is Histidinol-phosphate aminotransferase from Geotalea daltonii (strain DSM 22248 / JCM 15807 / FRC-32) (Geobacter daltonii).